The chain runs to 75 residues: ATP synthase subunit c (75 aa).

Helical transmembrane passes span 8–28 and 52–72; these read FIAIGLAVFGMLGAGLGIANI and IGAAMVEIMGLLAFVLAMLLI.

It belongs to the ATPase C chain family. In terms of assembly, F-type ATPases have 2 components, F(1) - the catalytic core - and F(0) - the membrane proton channel. F(1) has five subunits: alpha(3), beta(3), gamma(1), delta(1), epsilon(1). F(0) has three main subunits: a(1), b(2) and c(10-14). The alpha and beta chains form an alternating ring which encloses part of the gamma chain. F(1) is attached to F(0) by a central stalk formed by the gamma and epsilon chains, while a peripheral stalk is formed by the delta and b chains.

Its subcellular location is the cell membrane. Functionally, f(1)F(0) ATP synthase produces ATP from ADP in the presence of a proton or sodium gradient. F-type ATPases consist of two structural domains, F(1) containing the extramembraneous catalytic core and F(0) containing the membrane proton channel, linked together by a central stalk and a peripheral stalk. During catalysis, ATP synthesis in the catalytic domain of F(1) is coupled via a rotary mechanism of the central stalk subunits to proton translocation. Its function is as follows. Key component of the F(0) channel; it plays a direct role in translocation across the membrane. A homomeric c-ring of between 10-14 subunits forms the central stalk rotor element with the F(1) delta and epsilon subunits. This Wolbachia pipientis wMel protein is ATP synthase subunit c.